A 427-amino-acid chain; its full sequence is Phosphoribosylamine--glycine ligase (427 aa).

The 206-residue stretch at 110 to 315 (KDFCQRHGLP…IVPILLAAAK (206 aa)) folds into the ATP-grasp domain. 136-196 (LDTLEAPFVI…EEFMHGEEAS (61 aa)) provides a ligand contact to ATP. Glu-285 and Asn-287 together coordinate Mg(2+).

It belongs to the GARS family. It depends on Mg(2+) as a cofactor. Mn(2+) is required as a cofactor.

The catalysed reaction is 5-phospho-beta-D-ribosylamine + glycine + ATP = N(1)-(5-phospho-beta-D-ribosyl)glycinamide + ADP + phosphate + H(+). It participates in purine metabolism; IMP biosynthesis via de novo pathway; N(1)-(5-phospho-D-ribosyl)glycinamide from 5-phospho-alpha-D-ribose 1-diphosphate: step 2/2. The sequence is that of Phosphoribosylamine--glycine ligase from Caulobacter vibrioides (strain ATCC 19089 / CIP 103742 / CB 15) (Caulobacter crescentus).